Consider the following 333-residue polypeptide: MRRNILSMFLFITLIIYSSIFAVNVRIKDFAKFRGARDNQLFGVGIVVGLNGTGDSGTLNSTLLSNMLKNFGVAVNPNDLKTKNAALVMVVADIPPFYKPGMRLDVEVASINDAKSLRNGILLQTPLYGADGNVYAVAQGPVSVGGEDVKGSVNLQKRFPVVGYIPEGALVEREIPFSIVDGNSVTILLNKPDFTTAARTALAINTKFGTNIAKALDGASVKVNIPNVFSDDVISFLALLEEIEVPVDVVAQVVINERTGTVVFGGDIGIADFVLSYGNFVITISNGQIGDKKATIGNLITALKSLGATPQDIIAVVQELYKAGVIFAQLKIM.

The N-terminal stretch at 1 to 22 is a signal peptide; that stretch reads MRRNILSMFLFITLIIYSSIFA.

This sequence belongs to the FlgI family. As to quaternary structure, the basal body constitutes a major portion of the flagellar organelle and consists of four rings (L,P,S, and M) mounted on a central rod.

Its subcellular location is the periplasm. It localises to the bacterial flagellum basal body. Its function is as follows. Assembles around the rod to form the L-ring and probably protects the motor/basal body from shearing forces during rotation. The sequence is that of Flagellar P-ring protein from Fervidobacterium nodosum (strain ATCC 35602 / DSM 5306 / Rt17-B1).